We begin with the raw amino-acid sequence, 256 residues long: Nuclear shuttle protein (256 aa).

The Bipartite nuclear localization signal motif lies at His21–Tyr42. Positions Ser81–Leu96 match the Nuclear localization signal motif. The interaction with Arabidopsis thaliana NSI protein stretch occupies residues Glu150–Asp187.

Belongs to the begomovirus nuclear shuttle protein family. Binds to single-stranded and double-stranded viral DNA. Interacts with the host nuclear shuttle interacting (NSI) protein. This interaction may allow NSP to recruit NSI monomers to the viral genome and thus regulate nuclear export of viral genome by NSP.

The protein resides in the host nucleus. It is found in the host cytoplasm. It localises to the host cell membrane. Its function is as follows. Binds to the genomic viral ssDNA, shuttles it into and out of the cell nucleus. Begomoviruses use 2 proteins to transport their DNA from cell to cell. The nuclear shuttle protein (NSP) shuttles it between nucleus and cytoplasm and the movement protein (MP) probably transports the DNA-NSP complex to the cell periphery and facilitates movement across the cell wall. In Solanum lycopersicum (Tomato), this protein is Nuclear shuttle protein.